The sequence spans 131 residues: Methyl-coenzyme M reductase operon protein D (131 aa).

MCR is composed of three subunits: alpha, beta, and gamma. The function of proteins C and D is not known.

This Methanothermus fervidus protein is Methyl-coenzyme M reductase operon protein D (mcrD).